Reading from the N-terminus, the 332-residue chain is MKYEIDKKRLVIRVVPEREEDLYFIYLLIDKGDIIRGWTVREYKPDGVKEGERIKMYLAIKAEALEYHKFRGSLRVRGPVIEVQEGVEGVKGRRHTFDISIGREIEIEKNEDKPLEVVDEILNMAKNVMPRILLISIDDEEAAFAYITSIGVNVLHVVRNDAERSRGDSLLHDYLVTIGKIAEDLKRRLNPDKVVVTGPHIVVEQIGNYVRGDRVAQSVGGLAGIYEFMRAGLYDGLKTEMGIKAYERLMQLLATERNLVAIGLEEVEMAVAAGRVEILLIVDSYIKEDPHRAWDLIYKVYATRGKIYIIREDLEIGTSLKAMGGVASILRW.

It belongs to the eukaryotic release factor 1 family. Pelota subfamily. In terms of assembly, monomer. The cofactor is a divalent metal cation.

It is found in the cytoplasm. May function in recognizing stalled ribosomes, interact with stem-loop structures in stalled mRNA molecules, and effect endonucleolytic cleavage of the mRNA. May play a role in the release non-functional ribosomes and degradation of damaged mRNAs. Has endoribonuclease activity. The chain is Protein pelota homolog from Pyrobaculum aerophilum (strain ATCC 51768 / DSM 7523 / JCM 9630 / CIP 104966 / NBRC 100827 / IM2).